Reading from the N-terminus, the 191-residue chain is Endoribonuclease YbeY (191 aa).

Zn(2+)-binding residues include His-122, His-126, and His-132. Residues 164–191 (QPKPSGPKAFPDAAERAELDKEVPGGGI) form a disordered region. Basic and acidic residues predominate over residues 176-191 (AAERAELDKEVPGGGI).

This sequence belongs to the endoribonuclease YbeY family. Requires Zn(2+) as cofactor.

The protein resides in the cytoplasm. Single strand-specific metallo-endoribonuclease involved in late-stage 70S ribosome quality control and in maturation of the 3' terminus of the 16S rRNA. The polypeptide is Endoribonuclease YbeY (Corynebacterium aurimucosum (strain ATCC 700975 / DSM 44827 / CIP 107346 / CN-1) (Corynebacterium nigricans)).